Here is a 249-residue protein sequence, read N- to C-terminus: 2,3-bisphosphoglycerate-dependent phosphoglycerate mutase (249 aa).

Substrate-binding positions include 11–18 (RHGESDWN), 24–25 (TG), Arg63, 90–93 (ERHY), Lys101, 117–118 (RR), and 184–185 (GN). His12 serves as the catalytic Tele-phosphohistidine intermediate. Glu90 serves as the catalytic Proton donor/acceptor.

The protein belongs to the phosphoglycerate mutase family. BPG-dependent PGAM subfamily.

It catalyses the reaction (2R)-2-phosphoglycerate = (2R)-3-phosphoglycerate. It functions in the pathway carbohydrate degradation; glycolysis; pyruvate from D-glyceraldehyde 3-phosphate: step 3/5. Catalyzes the interconversion of 2-phosphoglycerate and 3-phosphoglycerate. This chain is 2,3-bisphosphoglycerate-dependent phosphoglycerate mutase, found in Mycobacterium bovis (strain BCG / Pasteur 1173P2).